Here is a 285-residue protein sequence, read N- to C-terminus: Probable endonuclease 4 (285 aa).

9 residues coordinate Zn(2+): H69, H109, E145, D179, H182, H216, D229, H231, and E261.

Belongs to the AP endonuclease 2 family. Requires Zn(2+) as cofactor.

It catalyses the reaction Endonucleolytic cleavage to 5'-phosphooligonucleotide end-products.. Functionally, endonuclease IV plays a role in DNA repair. It cleaves phosphodiester bonds at apurinic or apyrimidinic (AP) sites, generating a 3'-hydroxyl group and a 5'-terminal sugar phosphate. The protein is Probable endonuclease 4 of Salmonella typhi.